A 268-amino-acid chain; its full sequence is MPELPEVETIKNNLQEILPLRIKELEIRREDILRCRDYALEELTGQIIEEASRRGKYLILAVDNGLFLVFHLGMSGRLYIQEEETTVLEPHVHVIIHLDKRLKLLYQDARRFGGLWLLKDTQCFFSRLGKEPLSEEFCPRYLEQVLQGRQTAIKNLLLNQNLISGIGNIYADEALFMAGIRPDRQAASLSVREIEGLCCGIKEVLAKSIKYRGTTFRDYRDGKRQPGEFQNHLQVYGRFNQACPNCGQPLKRSRIGGRSSHYCEKCQQ.

The active-site Schiff-base intermediate with DNA is the Pro-2. Glu-3 serves as the catalytic Proton donor. Lys-56 functions as the Proton donor; for beta-elimination activity in the catalytic mechanism. DNA is bound by residues His-91, Arg-110, and Arg-149. The FPG-type zinc-finger motif lies at 234-268 (QVYGRFNQACPNCGQPLKRSRIGGRSSHYCEKCQQ). Arg-258 serves as the catalytic Proton donor; for delta-elimination activity.

It belongs to the FPG family. In terms of assembly, monomer. Zn(2+) is required as a cofactor.

The catalysed reaction is Hydrolysis of DNA containing ring-opened 7-methylguanine residues, releasing 2,6-diamino-4-hydroxy-5-(N-methyl)formamidopyrimidine.. It catalyses the reaction 2'-deoxyribonucleotide-(2'-deoxyribose 5'-phosphate)-2'-deoxyribonucleotide-DNA = a 3'-end 2'-deoxyribonucleotide-(2,3-dehydro-2,3-deoxyribose 5'-phosphate)-DNA + a 5'-end 5'-phospho-2'-deoxyribonucleoside-DNA + H(+). Functionally, involved in base excision repair of DNA damaged by oxidation or by mutagenic agents. Acts as a DNA glycosylase that recognizes and removes damaged bases. Has a preference for oxidized purines, such as 7,8-dihydro-8-oxoguanine (8-oxoG). Has AP (apurinic/apyrimidinic) lyase activity and introduces nicks in the DNA strand. Cleaves the DNA backbone by beta-delta elimination to generate a single-strand break at the site of the removed base with both 3'- and 5'-phosphates. This Syntrophomonas wolfei subsp. wolfei (strain DSM 2245B / Goettingen) protein is Formamidopyrimidine-DNA glycosylase.